The following is a 317-amino-acid chain: Inactive serine protease 45 (317 aa).

Positions 1-35 are cleaved as a signal peptide; sequence MATSLRGLDAGPGSLRRWILICFAALLLLPPRPNL. N-linked (GlcNAc...) asparagine glycosylation occurs at asparagine 40. In terms of domain architecture, Peptidase S1 spans 44 to 291; sequence PVCGTPWWPD…YTIWIKDQVS (248 aa). A disulfide bridge links cysteine 75 with cysteine 91. A glycan (N-linked (GlcNAc...) asparagine) is linked at asparagine 110. 3 disulfide bridges follow: cysteine 172-cysteine 249, cysteine 207-cysteine 230, and cysteine 239-cysteine 267. The N-linked (GlcNAc...) asparagine glycan is linked to asparagine 272.

Belongs to the peptidase S1 family.

It is found in the secreted. The chain is Inactive serine protease 45 from Mus musculus (Mouse).